Here is a 329-residue protein sequence, read N- to C-terminus: Malate dehydrogenase (329 aa).

Residue G12–G18 coordinates NAD(+). Residues R93 and R99 each coordinate substrate. NAD(+) is bound by residues N106, Q113, and T130–N132. 2 residues coordinate substrate: N132 and R163. H188 functions as the Proton acceptor in the catalytic mechanism.

Belongs to the LDH/MDH superfamily. MDH type 2 family.

The enzyme catalyses (S)-malate + NAD(+) = oxaloacetate + NADH + H(+). In terms of biological role, catalyzes the reversible oxidation of malate to oxaloacetate. This is Malate dehydrogenase from Mycobacterium ulcerans (strain Agy99).